We begin with the raw amino-acid sequence, 1162 residues long: Sialidase (1162 aa).

BNR repeat units follow at residues 23–34, 163–174, and 209–220; these read KYSVDDGETWET, FYSEDDGKTWKF, and YESSDMEKPWVE. N-linked (GlcNAc...) asparagine glycosylation is found at Asn-342 and Asn-394. The segment at 587–1123 is disordered; the sequence is HMDSSSDSSA…STPSTPAGSS (537 aa). The span at 589–615 shows a compositional bias: low complexity; sequence DSSSDSSAHSTPSTPADSSAHSTPSTP. Residues 589–1120 are 44 X 12 AA tandem repeats, LTR domain; that stretch reads DSSSDSSAHS…SAHSTPSTPA (532 aa). Composition is skewed to polar residues over residues 616–689 and 699–1123; these read VDSS…TPVD and PADS…AGSS. Residue Asn-1125 is glycosylated (N-linked (GlcNAc...) asparagine).

Belongs to the glycosyl hydrolase 33 family.

It localises to the cell membrane. It catalyses the reaction Hydrolysis of alpha-(2-&gt;3)-, alpha-(2-&gt;6)-, alpha-(2-&gt;8)- glycosidic linkages of terminal sialic acid residues in oligosaccharides, glycoproteins, glycolipids, colominic acid and synthetic substrates.. Functionally, developmentally regulated neuraminidase implicated in parasite invasion of cells. This Trypanosoma cruzi protein is Sialidase (TCNA).